The primary structure comprises 173 residues: Protein-export protein SecB (173 aa).

It belongs to the SecB family. As to quaternary structure, homotetramer, a dimer of dimers. One homotetramer interacts with 1 SecA dimer.

It is found in the cytoplasm. One of the proteins required for the normal export of preproteins out of the cell cytoplasm. It is a molecular chaperone that binds to a subset of precursor proteins, maintaining them in a translocation-competent state. It also specifically binds to its receptor SecA. The protein is Protein-export protein SecB of Novosphingobium aromaticivorans (strain ATCC 700278 / DSM 12444 / CCUG 56034 / CIP 105152 / NBRC 16084 / F199).